Consider the following 393-residue polypeptide: Putative 8-amino-7-oxononanoate synthase (393 aa).

R23 contacts substrate. 110 to 111 serves as a coordination point for pyridoxal 5'-phosphate; the sequence is GY. A substrate-binding site is contributed by H135. Pyridoxal 5'-phosphate contacts are provided by residues S183, 208–211, and 239–242; these read DEAH and TLSK. K242 carries the post-translational modification N6-(pyridoxal phosphate)lysine. T362 lines the substrate pocket.

This sequence belongs to the class-II pyridoxal-phosphate-dependent aminotransferase family. BioF subfamily. Homodimer. Pyridoxal 5'-phosphate serves as cofactor.

It catalyses the reaction 6-carboxyhexanoyl-[ACP] + L-alanine + H(+) = (8S)-8-amino-7-oxononanoate + holo-[ACP] + CO2. Its pathway is cofactor biosynthesis; biotin biosynthesis. Catalyzes the decarboxylative condensation of pimeloyl-[acyl-carrier protein] and L-alanine to produce 8-amino-7-oxononanoate (AON), [acyl-carrier protein], and carbon dioxide. The chain is Putative 8-amino-7-oxononanoate synthase (bioF) from Trichodesmium erythraeum (strain IMS101).